The following is a 1717-amino-acid chain: PH domain leucine-rich repeat-containing protein phosphatase 1 (1717 aa).

Methionine 1 bears the N-acetylmethionine mark. 4 disordered regions span residues 1–25 (MEPA…SAPA), 41–118 (LAAA…GANS), 136–156 (AASS…GAAG), and 252–470 (PGAA…PPPT). The span at 98-110 (APQPIAGGAAPVP) shows a compositional bias: low complexity. Residues 262–274 (EPPPEAGPRLAPP) are compositionally biased toward pro residues. 2 stretches are compositionally biased toward low complexity: residues 313–325 (SRRA…DSSP) and 333–345 (PVSS…PVVS). Serine 317 is modified (phosphoserine). 2 stretches are compositionally biased toward polar residues: residues 346–358 (DTES…SAES) and 408–417 (QTASSPQPQQ). The residue at position 412 (serine 412) is a Phosphoserine. Positions 536-636 (RIQLSGMYNV…WLRQVSKVAS (101 aa)) constitute a PH domain. LRR repeat units lie at residues 638 to 659 (RISS…LFYS), 661 to 682 (DLTH…PAAR), 692 to 712 (KLKS…AVCS), 715 to 736 (TLAE…VGVM), 738 to 760 (NLQT…ENMK), 761 to 783 (QLSY…EKLT), 784 to 804 (AVDK…QALR), 808 to 831 (HIKH…DFLQ), 832 to 853 (HVTQ…IFNN), 873 to 894 (FLKA…PVPN), 895 to 916 (YLSY…VCES), 918 to 939 (KLEV…LFCN), 941 to 962 (SLRK…LERT), 963 to 984 (SVEV…LLMK), 987 to 1008 (SLRF…TLSE), 1013 to 1033 (ILQE…PLLT), 1037 to 1058 (HLKI…KMAK), 1061 to 1082 (ELEE…IMNC), 1084 to 1105 (RMHT…MQLP), 1106 to 1127 (EIKC…ENLP), and 1129 to 1150 (KLQE…TLEL). The tract at residues 1076-1205 (PTTIMNCRRM…NNFCDNREAL (130 aa)) is interaction with NHERF1. The 248-residue stretch at 1175-1422 (SHGYTEASGV…DSISAVVVQL (248 aa)) folds into the PPM-type phosphatase domain. Aspartate 1210, glycine 1211, lysine 1374, and aspartate 1413 together coordinate Mn(2+). 2 disordered regions span residues 1458–1510 (DRPS…SPAY) and 1673–1717 (EVKE…DTPL). The segment covering 1468-1489 (SSSSGMASEISSELSTSEMSSE) has biased composition (low complexity). Positions 1715-1717 (TPL) match the PDZ-binding; required for interaction with NHERF1 motif.

Interacts with the nucleotide free form of K-Ras (KRAS) via its LRR repeats. Interacts with AKT2, AKT3, PRKCB isoform beta-II, STK4, RPS6KB1, RAF1. Isoform 1 (predominantly) and isoform 2 interact with BRAP. Interacts with FKBP5; FKBP5 acts as a scaffold for PHLPP1 and Akt. Interacts with SCRIB; SCRIB acts as a scaffold for PHLPP1 and Akt. Interacts with NHERF1; NHERF1 scaffolds a heterotrimeric complex with PTEN at the plasma membrane. Interacts with WDR48 and USP12. Mn(2+) serves as cofactor. As to expression, in colorectal cancer tissue, expression is highest in the surface epithelium of normal colonic mucosa adjacent to the cancer tissue but is largely excluded from the crypt bases. Expression is lost or significantly decreased in 78% of tested tumors (at protein level). Ubiquitously expressed in non-cancerous tissues.

It localises to the cytoplasm. The protein resides in the membrane. Its subcellular location is the nucleus. It is found in the cell membrane. The enzyme catalyses O-phospho-L-seryl-[protein] + H2O = L-seryl-[protein] + phosphate. It catalyses the reaction O-phospho-L-threonyl-[protein] + H2O = L-threonyl-[protein] + phosphate. Insensitive to okadaic acid. Deubiquitination by WDR48-USP12 complex positively regulates PHLPP1 stability. Functionally, protein phosphatase involved in regulation of Akt and PKC signaling. Mediates dephosphorylation in the C-terminal domain hydrophobic motif of members of the AGC Ser/Thr protein kinase family; specifically acts on 'Ser-473' of AKT2 and AKT3, 'Ser-660' of PRKCB and 'Ser-657' of PRKCA. Isoform 2 seems to have a major role in regulating Akt signaling in hippocampal neurons. Akt regulates the balance between cell survival and apoptosis through a cascade that primarily alters the function of transcription factors that regulate pro- and antiapoptotic genes. Dephosphorylation of 'Ser-473' of Akt triggers apoptosis and suppression of tumor growth. Dephosphorylation of PRKCA and PRKCB leads to their destabilization and degradation. Dephosphorylates STK4 on 'Thr-387' leading to STK4 activation and apoptosis. Dephosphorylates RPS6KB1 and is involved in regulation of cap-dependent translation. Inhibits cancer cell proliferation and may act as a tumor suppressor. Dephosphorylates RAF1 inhibiting its kinase activity. May act as a negative regulator of K-Ras signaling in membrane rafts. Involved in the hippocampus-dependent long-term memory formation. Involved in circadian control by regulating the consolidation of circadian periodicity after resetting. Involved in development and function of regulatory T-cells. This Homo sapiens (Human) protein is PH domain leucine-rich repeat-containing protein phosphatase 1 (PHLPP1).